A 431-amino-acid polypeptide reads, in one-letter code: Serine--tRNA ligase (431 aa).

Residue 237 to 239 coordinates L-serine; sequence TAE. ATP is bound at residue 268 to 270; that stretch reads RSE. An L-serine-binding site is contributed by Glu291. 355-358 is an ATP binding site; sequence EISS. Ser390 is a binding site for L-serine.

It belongs to the class-II aminoacyl-tRNA synthetase family. Type-1 seryl-tRNA synthetase subfamily. In terms of assembly, homodimer. The tRNA molecule binds across the dimer.

The protein resides in the cytoplasm. The enzyme catalyses tRNA(Ser) + L-serine + ATP = L-seryl-tRNA(Ser) + AMP + diphosphate + H(+). It carries out the reaction tRNA(Sec) + L-serine + ATP = L-seryl-tRNA(Sec) + AMP + diphosphate + H(+). The protein operates within aminoacyl-tRNA biosynthesis; selenocysteinyl-tRNA(Sec) biosynthesis; L-seryl-tRNA(Sec) from L-serine and tRNA(Sec): step 1/1. Catalyzes the attachment of serine to tRNA(Ser). Is also able to aminoacylate tRNA(Sec) with serine, to form the misacylated tRNA L-seryl-tRNA(Sec), which will be further converted into selenocysteinyl-tRNA(Sec). This is Serine--tRNA ligase from Neisseria gonorrhoeae (strain ATCC 700825 / FA 1090).